We begin with the raw amino-acid sequence, 951 residues long: MHKRKGPPGPPGRGAAAARQLGLLVDLSPDGLMIPEDGANDEELEAEFLALVGGQPPALEKLKGKGPLPMEAIEKMASLCMRDPDEDEEEGTDEDDLEADDDLLAELNEVLGEEQKASETPPPVAQPKPEAPHPGLETTLQERLALYQTAIESARQAGDSAKMRRYDRGLKTLENLLASIRKGNAIDEADIPPPVAIGKGPASTPTYSPAPTQPAPRIASAPEPRVTLEGPSATAPASSPGLAKPQMPPGPCSPGPLAQLQSRQRDYKLAALHAKQQGDTTAAARHFRVAKSFDAVLEALSRGEPVDLSCLPPPPDQLPPDPPSPPSQPPTPATAPSTTEVPPPPRTLLEALEQRMERYQVAAAQAKSKGDQRKARMHERIVKQYQDAIRAHKAGRAVDVAELPVPPGFPPIQGLEATKPTQQSLVGVLETAMKLANQDEGPEDEEDEVPKKQNSPVAPTAQPKAPPSRTPQSGSAPTAKAPPKATSTRAQQQLAFLEGRKKQLLQAALRAKQKNDVEGAKMHLRQAKGLEPMLEASRNGLPVDITKVPPAPVNKDDFALVQRPGPGLSQEAARRYGELTKLIRQQHEMCLNHSNQFTQLGNITETTKFEKLAEDCKRSMDILKQAFVRGLPTPTARFEQRTFSVIKIFPDLSSNDMLLFIVKGINLPTPPGLSPGDLDVFVRFDFPYPNVEEAQKDKTSVIKNTDSPEFKEQFKLCINRSHRGFRRAIQTKGIKFEVVHKGGLFKTDRVLGTAQLKLDALEIACEVREILEVLDGRRPTGGRLEVMVRIREPLTAQQLETTTERWLVIDPVPAAVPTQVAGPKGKAPPVPAPARESGNRSARPLHSLSVLAFDQERLERKILALRQARRPVPPEVAQQYQDIMQRSQWQRAQLEQGGVGIRREYAAQLERQLQFYTEAARRLGNDGSRDAAKEALYRRNLVESELQRLRR.

4 disordered regions span residues 80–139 (CMRD…LETT), 185–266 (AIDE…RQRD), 306–346 (VDLS…PPPR), and 437–491 (NQDE…TRAQ). Positions 84-104 (PDEDEEEGTDEDDLEADDDLL) are enriched in acidic residues. 3 positions are modified to phosphothreonine: Thr92, Thr204, and Thr206. A compositionally biased stretch (low complexity) spans 201–210 (PASTPTYSPA). Ser208 carries the post-translational modification Phosphoserine; by CDK1. Residues Ser253 and Ser324 each carry the phosphoserine modification. Residues 311-333 (LPPPPDQLPPDPPSPPSQPPTPA) are compositionally biased toward pro residues. A coiled-coil region spans residues 346–392 (RTLLEALEQRMERYQVAAAQAKSKGDQRKARMHERIVKQYQDAIRAH). Residue Ser455 is modified to Phosphoserine. The span at 475-488 (SAPTAKAPPKATST) shows a compositional bias: low complexity. Residues 484–517 (KATSTRAQQQLAFLEGRKKQLLQAALRAKQKNDV) adopt a coiled-coil conformation. Positions 637–771 (RFEQRTFSVI…EIACEVREIL (135 aa)) constitute a C2 domain. Positions 818 to 841 (TQVAGPKGKAPPVPAPARESGNRS) are disordered.

This sequence belongs to the CC2D1 family. Phosphorylation on Ser-208 by CDK1 promotes spindle pole localization and association with SCC1/RAD21.

The protein localises to the cytoplasm. It localises to the nucleus. The protein resides in the cytoskeleton. Its subcellular location is the microtubule organizing center. It is found in the centrosome. In terms of biological role, transcription factor that binds specifically to the DRE (dual repressor element) and represses HTR1A gene transcription in neuronal cells. The combination of calcium and ATP specifically inactivates the binding with FRE. May play a role in the altered regulation of HTR1A associated with anxiety and major depression. Mediates HDAC-independent repression of HTR1A promoter in neuronal cell. Performs essential function in controlling functional maturation of synapses. Plays distinct roles depending on its localization. When cytoplasmic, acts as a scaffold protein in the PI3K/PDK1/AKT pathway. Repressor of HTR1A when nuclear. In the centrosome, regulates spindle pole localization of the cohesin subunit SCC1/RAD21, thereby mediating centriole cohesion during mitosis. The polypeptide is Coiled-coil and C2 domain-containing protein 1A (CC2D1A) (Homo sapiens (Human)).